Reading from the N-terminus, the 1221-residue chain is A disintegrin and metalloproteinase with thrombospondin motifs 18 (1221 aa).

The N-terminal stretch at 1–47 (MECALLLACAFPAAGSGPPRGLAGLGRVAKALQLCCLCCASVAAALA) is a signal peptide. The propeptide occupies 48 to 284 (SDSSSGASGL…EYGSSGRPRR (237 aa)). N-linked (GlcNAc...) asparagine glycosylation is found at Asn151 and Asn190. The Cysteine switch motif lies at 252–259 (HFCGRRKK). Cys254 contributes to the Zn(2+) binding site. Residues 258–291 (KKYAPKPPTEDTYLRFDEYGSSGRPRRSAGKSQK) form a disordered region. The span at 265 to 275 (PTEDTYLRFDE) shows a compositional bias: basic and acidic residues. The region spanning 293-498 (LNVETLVVAD…PQAGCLVDEP (206 aa)) is the Peptidase M12B domain. The N-linked (GlcNAc...) asparagine glycan is linked to Asn313. Cystine bridges form between Cys369-Cys420, Cys395-Cys402, Cys414-Cys493, Cys453-Cys477, Cys521-Cys546, Cys532-Cys553, Cys541-Cys572, Cys566-Cys577, Cys601-Cys638, Cys605-Cys643, and Cys616-Cys628. Residue His436 coordinates Zn(2+). Glu437 is a catalytic residue. Zn(2+) contacts are provided by His440 and His446. The 80-residue stretch at 498–577 (PKQAGQYKYP…LSMWCRQGQC (80 aa)) folds into the Disintegrin domain. The TSP type-1 1 domain maps to 589 to 644 (HGQWSAWSKWSECSRTCGGGVKFQERHCNNPKPQYGGLFCPGSSRIYQLCNINPCN). N-linked (GlcNAc...) asparagine glycosylation is found at Asn745, Asn838, and Asn909. Residues 750–876 (FYKGLYLNQH…TPPATKRPAY (127 aa)) form a spacer region. TSP type-1 domains follow at residues 931–990 (CPAY…NSHA), 991–1049 (CPPQ…GRCP), 1052–1116 (SRLQ…RACP), and 1123–1178 (MVAG…NFCP). Residues 1184–1221 (EDPSCVDFFNWCHLVPQHGVCNHKFYGKQCCKSCTRKI) enclose the PLAC domain.

It depends on Zn(2+) as a cofactor. The precursor is cleaved by a furin endopeptidase. In terms of processing, glycosylated. Can be O-fucosylated by POFUT2 on a serine or a threonine residue found within the consensus sequence C1-X(2)-(S/T)-C2-G of the TSP type-1 repeat domains where C1 and C2 are the first and second cysteine residue of the repeat, respectively. Fucosylated repeats can then be further glycosylated by the addition of a beta-1,3-glucose residue by the glucosyltransferase, B3GALTL. Fucosylation mediates the efficient secretion of ADAMTS family members. Can also be C-glycosylated with one or two mannose molecules on tryptophan residues within the consensus sequence W-X-X-W of the TPRs, and N-glycosylated. These other glycosylations can also facilitate secretion. As to expression, expressed in fetal lung, liver, and kidney and in adult brain, prostate, submaxillary gland, and endothelium.

It is found in the secreted. The protein localises to the extracellular space. Its subcellular location is the extracellular matrix. The polypeptide is A disintegrin and metalloproteinase with thrombospondin motifs 18 (ADAMTS18) (Homo sapiens (Human)).